An 870-amino-acid polypeptide reads, in one-letter code: UvrABC system protein B (870 aa).

In terms of domain architecture, Helicase ATP-binding spans 20–410 (EGVDNNDRTQ…VFAEQVIRPT (391 aa)). 33–40 (GVTGSGKT) is an ATP binding site. Residues 86–109 (YYDYYQPEAYVPRTDTFIEKESSI) carry the Beta-hairpin motif. Residues 425–591 (QVDDVVGEIR…SVKSRISDIL (167 aa)) form the Helicase C-terminal domain. Residues 620–655 (KAHLDAMEKQMRDAAANLDFEKAARIRDEIKRLREM) enclose the UVR domain. 2 disordered regions span residues 671–698 (ESPV…QERF) and 741–870 (AKPS…RPGK). Over residues 679 to 689 (KGKHNKGVAKH) the composition is skewed to basic residues. Composition is skewed to basic and acidic residues over residues 793–808 (NSLD…KPVE) and 827–836 (TDVKDRDDSA). Residues 858 to 870 (EKRRPGKTGRPGK) are compositionally biased toward basic residues.

It belongs to the UvrB family. Forms a heterotetramer with UvrA during the search for lesions. Interacts with UvrC in an incision complex.

The protein localises to the cytoplasm. The UvrABC repair system catalyzes the recognition and processing of DNA lesions. A damage recognition complex composed of 2 UvrA and 2 UvrB subunits scans DNA for abnormalities. Upon binding of the UvrA(2)B(2) complex to a putative damaged site, the DNA wraps around one UvrB monomer. DNA wrap is dependent on ATP binding by UvrB and probably causes local melting of the DNA helix, facilitating insertion of UvrB beta-hairpin between the DNA strands. Then UvrB probes one DNA strand for the presence of a lesion. If a lesion is found the UvrA subunits dissociate and the UvrB-DNA preincision complex is formed. This complex is subsequently bound by UvrC and the second UvrB is released. If no lesion is found, the DNA wraps around the other UvrB subunit that will check the other stand for damage. This Mesorhizobium japonicum (strain LMG 29417 / CECT 9101 / MAFF 303099) (Mesorhizobium loti (strain MAFF 303099)) protein is UvrABC system protein B.